The chain runs to 252 residues: Large ribosomal subunit protein uL10m (252 aa).

A mitochondrion-targeting transit peptide spans 1–24; that stretch reads MAATLCCRLLPKAGWVPLTQSVRH.

The protein belongs to the universal ribosomal protein uL10 family. As to quaternary structure, component of the mitochondrial ribosome large subunit (39S) which comprises a 16S rRNA and about 50 distinct proteins.

Its subcellular location is the mitochondrion. This chain is Large ribosomal subunit protein uL10m (mrpl10), found in Danio rerio (Zebrafish).